Reading from the N-terminus, the 1076-residue chain is Histone deacetylase 4 (1076 aa).

Positions 66-169 form a coiled coil; the sequence is REQQLQQELL…GKESAVASTE (104 aa). The segment at 117–312 is interaction with MEF2A; sequence MLAMKHQQEL…NSSSGNVSTE (196 aa). The segment covering 132–162 has biased composition (basic and acidic residues); that stretch reads KLERHRQEQELEKQHREQKLQQLKNKEKGKE. Disordered regions lie at residues 132-166, 205-225, and 239-323; these read KLERHRQEQELEKQHREQKLQQLKNKEKGKESAVA, TQHSSLDQSSPPQSGVSASYN, and PLRK…PSAP. Positions 205–224 are enriched in polar residues; sequence TQHSSLDQSSPPQSGVSASY. Ser-209 carries the phosphoserine modification. Phosphoserine; by CaMK4 and SIK1 is present on Ser-245. A compositionally biased stretch (basic and acidic residues) spans 258 to 273; that stretch reads KVAERRSSPLLRRKDG. Over residues 289 to 310 the composition is skewed to low complexity; the sequence is SACSSAPGSGPSSPNSSSGNVS. The PxLPxI/L motif; mediates interaction with ANKRA2 and 14-3-3 proteins signature appears at 348 to 353; that stretch reads PSLPNI. Ser-349 is modified (phosphoserine). Ser-465 is subject to Phosphoserine; by CaMK4 and SIK1. Disordered stretches follow at residues 506-529, 541-580, and 622-645; these read ISKPSEPPRQPESHPEETEEELRE, RLPGQKEPSLAGVQVKQEPIESEEEEAEATRETEPGQRPA, and RPLSRAQSSPASATFPMSVQEPPT. Positions 514–529 are enriched in basic and acidic residues; the sequence is RQPESHPEETEEELRE. Residue Lys-556 forms a Glycyl lysine isopeptide (Lys-Gly) (interchain with G-Cter in SUMO) linkage. Ser-562 carries the post-translational modification Phosphoserine. Polar residues predominate over residues 626-638; sequence RAQSSPASATFPM. Phosphoserine; by CaMK4 is present on Ser-629. A Phosphoserine modification is found at Ser-630. A histone deacetylase region spans residues 652 to 1076; the sequence is GLVYDTLMLK…EEPMEEEPPL (425 aa). 4 residues coordinate Zn(2+): Cys-664, Cys-666, His-672, and Cys-743. His-795 is an active-site residue. Residues 1043 to 1076 carry the Nuclear export signal motif; that stretch reads EEAETVTAMASLSVGVKPAEKRSEEEPMEEEPPL.

This sequence belongs to the histone deacetylase family. HD type 2 subfamily. Homodimer. Homodimerization via its N-terminal domain. Interacts with HDAC7. Interacts with MEF2A, MEF2C, MEF2D, MORC2 and NR2C1. Interacts with a 14-3-3 chaperone proteins in a phosphorylation dependent manner. Interacts with 14-3-3 protein YWHAB. Interacts with BTBD14B. Interacts with KDM5B. Interacts (via PxLPxI/L motif) with ANKRA2 (via ankyrin repeats). Interacts with CUL7 (as part of the 3M complex); negatively regulated by ANKRA2. Interacts with EP300 in the presence of TFAP2C. Interacts with AHRR. Interacts with MYOCD. Interacts with HSPA1A and HSPA1B leading to their deacetylation at 'Lys-77'. Interacts with ZBTB7B; the interaction allows the recruitment of HDAC4 on CD8 loci for deacetylation and possible inhibition of CD8 genes expression. Interacts with DHX36. Interacts with SIK3; this interaction leads to HDAC4 retention in the cytoplasm. Interacts with ZNF638. Post-translationally, phosphorylated by CaMK4 at Ser-245, Ser-465 and Ser-629. Phosphorylation at other residues by CaMK2D is required for the interaction with 14-3-3. Phosphorylation at Ser-349, within the PxLPxI/L motif, impairs the binding of ANKRA2 but generates a high-affinity docking site for 14-3-3. Sumoylation on Lys-556 is promoted by the E3 SUMO-protein ligase RANBP2, and prevented by phosphorylation by CaMK4.

The protein resides in the nucleus. Its subcellular location is the cytoplasm. It carries out the reaction N(6)-acetyl-L-lysyl-[histone] + H2O = L-lysyl-[histone] + acetate. Functionally, responsible for the deacetylation of lysine residues on the N-terminal part of the core histones (H2A, H2B, H3 and H4). Histone deacetylation gives a tag for epigenetic repression and plays an important role in transcriptional regulation, cell cycle progression and developmental events. Histone deacetylases act via the formation of large multiprotein complexes. Involved in muscle maturation via its interaction with the myocyte enhancer factors such as MEF2A, MEF2C and MEF2D. Deacetylates HSPA1A and HSPA1A at 'Lys-77' leading to their preferential binding to co-chaperone STUB1. This is Histone deacetylase 4 (Hdac4) from Mus musculus (Mouse).